Here is a 180-residue protein sequence, read N- to C-terminus: dCTP deaminase, dUMP-forming (180 aa).

DCTP-binding positions include 96 to 101 (RSSLGR), D113, 121 to 123 (TLE), Q142, Y156, and Q163. E123 (proton donor/acceptor) is an active-site residue.

The protein belongs to the dCTP deaminase family. Homotrimer.

It catalyses the reaction dCTP + 2 H2O = dUMP + NH4(+) + diphosphate. The protein operates within pyrimidine metabolism; dUMP biosynthesis; dUMP from dCTP: step 1/1. Functionally, bifunctional enzyme that catalyzes both the deamination of dCTP to dUTP and the hydrolysis of dUTP to dUMP without releasing the toxic dUTP intermediate. This is dCTP deaminase, dUMP-forming from Aquifex aeolicus (strain VF5).